The chain runs to 200 residues: Somatotropin (200 aa).

An N-terminal signal peptide occupies residues 1-22 (MARVLVVLSVVVASLFFSQGAT). Position 38 (His-38) interacts with Zn(2+). The cysteines at positions 71 and 173 are disulfide-linked. Residue Glu-182 participates in Zn(2+) binding. An intrachain disulfide couples Cys-190 to Cys-198.

Belongs to the somatotropin/prolactin family.

The protein resides in the secreted. Functionally, growth hormone plays an important role in growth control and is involved in the regulation of several anabolic processes. Implicated as an osmoregulatory substance important for seawater adaptation. The chain is Somatotropin (gh) from Pangasianodon gigas (Mekong giant catfish).